A 379-amino-acid polypeptide reads, in one-letter code: Spermatogenesis-associated protein 17 (379 aa).

IQ domains follow at residues 48-77 (ENDA…VVTI), 71-100 (LNRV…AAYY), and 107-136 (YNEM…LKEY).

As to expression, strongly expressed in adult testis but weakly expressed in the spleen and thymus. Strongly expressed in round and elongating spermatids, and weakly or not expressed in spermatozoa.

It localises to the cytoplasm. In Mus musculus (Mouse), this protein is Spermatogenesis-associated protein 17 (Spata17).